A 224-amino-acid chain; its full sequence is BOS complex subunit TMEM147 (224 aa).

Residues 1–21 traverse the membrane as a helical segment; it reads MTLFHFGNCFALAYFPYFITY. Residues 22 to 34 lie on the Cytoplasmic side of the membrane; the sequence is KCSGLSEYNAFWK. Residues 35–58 traverse the membrane as a helical segment; that stretch reads CVQAGVTYLFVQLCKMLFLATFFP. The Lumenal portion of the chain corresponds to 59–66; it reads TWEGGIYD. Residues 67 to 88 traverse the membrane as a helical segment; sequence FIGEFMKASVDVADLIGLNLVM. At 89-98 the chain is on the cytoplasmic side; sequence SRNAGKGEYK. A helical membrane pass occupies residues 99–124; the sequence is IMVAALGWATAELIMSRCIPLWVGAR. Topologically, residues 125–129 are lumenal; sequence GIEFD. Residues 130 to 155 form a helical membrane-spanning segment; the sequence is WKYIQMSIDSNISLVHYIVASAQVWM. At 156-164 the chain is on the cytoplasmic side; sequence ITRYDLYHT. Residues 165–187 form a helical membrane-spanning segment; the sequence is FRPAVLLLMFLSVYKAFVMETFV. Residues 188-194 are Lumenal-facing; the sequence is HLCSLGS. Residues 195 to 216 form a helical membrane-spanning segment; the sequence is WAALLARAVVTGLLALSTLALY. The Cytoplasmic segment spans residues 217–224; the sequence is VAVVNVHS.

The protein belongs to the TMEM147 family. Component of the back of Sec61 (BOS) complex, composed of NCLN/Nicalin, NOMO (NOMO1, NOMO2 or NOMO3) and TMEM147. The BOS complex is part of the multi-pass translocon (MPT) complex, composed of three subcomplexes, the GEL complex (composed of RAB5IF/OPTI and TMCO1), the BOS complex (composed of NCLN/Nicalin, NOMO and TMEM147) and the PAT complex (composed of WDR83OS/Asterix and CCDC47). The MPT complex associates with the SEC61 complex. Interacts with CHRM3, CHRM1 and AVPR2. Interacts with LBR; promoting LBR localization to the nucleus inner membrane. Interacts with DHCR7.

The protein localises to the endoplasmic reticulum membrane. It is found in the nucleus membrane. The protein resides in the cell membrane. Functionally, component of the multi-pass translocon (MPT) complex that mediates insertion of multi-pass membrane proteins into the lipid bilayer of membranes. The MPT complex takes over after the SEC61 complex: following membrane insertion of the first few transmembrane segments of proteins by the SEC61 complex, the MPT complex occludes the lateral gate of the SEC61 complex to promote insertion of subsequent transmembrane regions. Also acts as a negative regulator of CHRM3 function, most likely by interfering with its trafficking to the cell membrane. Negatively regulates CHRM3-mediated calcium mobilization and activation of RPS6KA1/p90RSK activity. Regulates LBR localization to the nucleus inner membrane. This is BOS complex subunit TMEM147 from Homo sapiens (Human).